Here is a 582-residue protein sequence, read N- to C-terminus: Aspartate--tRNA(Asp/Asn) ligase (582 aa).

Glu-177 contributes to the L-aspartate binding site. Residues 201–204 are aspartate; the sequence is QLFK. Arg-223 is an L-aspartate binding site. ATP contacts are provided by residues 223–225 and Gln-232; that span reads RDE. Residue His-447 coordinates L-aspartate. ATP is bound at residue Glu-481. Arg-488 lines the L-aspartate pocket. ATP is bound at residue 533–536; the sequence is GLDR.

Belongs to the class-II aminoacyl-tRNA synthetase family. Type 1 subfamily. Homodimer.

It is found in the cytoplasm. The catalysed reaction is tRNA(Asx) + L-aspartate + ATP = L-aspartyl-tRNA(Asx) + AMP + diphosphate. Functionally, aspartyl-tRNA synthetase with relaxed tRNA specificity since it is able to aspartylate not only its cognate tRNA(Asp) but also tRNA(Asn). Reaction proceeds in two steps: L-aspartate is first activated by ATP to form Asp-AMP and then transferred to the acceptor end of tRNA(Asp/Asn). The protein is Aspartate--tRNA(Asp/Asn) ligase of Chlamydia trachomatis serovar L2 (strain ATCC VR-902B / DSM 19102 / 434/Bu).